The following is a 117-amino-acid chain: Hydrogenase maturation factor HypA (117 aa).

His2 provides a ligand contact to Ni(2+). Residues Cys73, Cys76, Cys92, and Cys95 each coordinate Zn(2+).

The protein belongs to the HypA/HybF family.

Involved in the maturation of [NiFe] hydrogenases. Required for nickel insertion into the metal center of the hydrogenase. The polypeptide is Hydrogenase maturation factor HypA (Solidesulfovibrio magneticus (strain ATCC 700980 / DSM 13731 / RS-1) (Desulfovibrio magneticus)).